Consider the following 516-residue polypeptide: Anaerobic nitric oxide reductase transcription regulator NorR (516 aa).

D57 is subject to 4-aspartylphosphate. Residues 187–416 (IIGLSAPMLQ…LEHAIHRAVV (230 aa)) form the Sigma-54 factor interaction domain. Residues 215–222 (GETGTGKE) and 278–287 (ADNGTLFLDE) each bind ATP. Residues 482–501 (WAATARALELDVANLHRLAK) constitute a DNA-binding region (H-T-H motif).

The protein operates within nitrogen metabolism; nitric oxide reduction. In terms of biological role, required for the expression of anaerobic nitric oxide (NO) reductase, acts as a transcriptional activator for at least the norVW operon. Activation also requires sigma-54. The polypeptide is Anaerobic nitric oxide reductase transcription regulator NorR (Klebsiella pneumoniae (strain 342)).